The following is a 439-amino-acid chain: Methylenetetrahydrofolate--tRNA-(uracil-5-)-methyltransferase TrmFO (439 aa).

9–14 (GAGLAG) serves as a coordination point for FAD.

It belongs to the MnmG family. TrmFO subfamily. Requires FAD as cofactor.

It localises to the cytoplasm. The enzyme catalyses uridine(54) in tRNA + (6R)-5,10-methylene-5,6,7,8-tetrahydrofolate + NADH + H(+) = 5-methyluridine(54) in tRNA + (6S)-5,6,7,8-tetrahydrofolate + NAD(+). The catalysed reaction is uridine(54) in tRNA + (6R)-5,10-methylene-5,6,7,8-tetrahydrofolate + NADPH + H(+) = 5-methyluridine(54) in tRNA + (6S)-5,6,7,8-tetrahydrofolate + NADP(+). Functionally, catalyzes the folate-dependent formation of 5-methyl-uridine at position 54 (M-5-U54) in all tRNAs. This is Methylenetetrahydrofolate--tRNA-(uracil-5-)-methyltransferase TrmFO from Lactobacillus delbrueckii subsp. bulgaricus (strain ATCC BAA-365 / Lb-18).